Consider the following 127-residue polypeptide: Large ribosomal subunit protein bL17 (127 aa).

It belongs to the bacterial ribosomal protein bL17 family. Part of the 50S ribosomal subunit. Contacts protein L32.

This chain is Large ribosomal subunit protein bL17, found in Legionella pneumophila (strain Lens).